The following is a 202-amino-acid chain: MAISKNLPLLNNHFRKHWQERVRVHFDQAGKKASRRQSRLRKAAKIAPRPIDALRPVVRAPTVKYNRKVRAGRGFTLAELKAVGIAPKYARTIGISVDHRRQNKSQETFDANVARLQEYKSKLVIFDKKTKASEVASFEQVDVSATFPVEQPAPESGLRAVEVPEQTAYRTLRLARNEKKYKGIREKRAKEKAEAEAEKAKK.

The interval 183-202 (GIREKRAKEKAEAEAEKAKK) is disordered.

The protein belongs to the eukaryotic ribosomal protein eL13 family. As to quaternary structure, component of the large ribosomal subunit. Mature ribosomes consist of a small (40S) and a large (60S) subunit. The 40S subunit contains about 32 different proteins and 1 molecule of RNA (18S). The 60S subunit contains 45 different proteins and 3 molecules of RNA (25S, 5.8S and 5S).

The protein localises to the cytoplasm. Functionally, component of the ribosome, a large ribonucleoprotein complex responsible for the synthesis of proteins in the cell. The small ribosomal subunit (SSU) binds messenger RNAs (mRNAs) and translates the encoded message by selecting cognate aminoacyl-transfer RNA (tRNA) molecules. The large subunit (LSU) contains the ribosomal catalytic site termed the peptidyl transferase center (PTC), which catalyzes the formation of peptide bonds, thereby polymerizing the amino acids delivered by tRNAs into a polypeptide chain. The nascent polypeptides leave the ribosome through a tunnel in the LSU and interact with protein factors that function in enzymatic processing, targeting, and the membrane insertion of nascent chains at the exit of the ribosomal tunnel. The sequence is that of Large ribosomal subunit protein eL13 from Candida albicans (strain SC5314 / ATCC MYA-2876) (Yeast).